Consider the following 261-residue polypeptide: WW domain-binding protein 2 (261 aa).

The GRAM domain occupies 1–84 (MALNKNHSEG…YLMKDCEIKQ (84 aa)). A Phosphotyrosine; by YES and SRC modification is found at Tyr192. The short motif at 196 to 200 (PPPPY) is the PPxY motif 1 element. Residues 196–209 (PPPPYPGPMEPPVS) show a composition bias toward pro residues. The tract at residues 196–261 (PPPPYPGPME…YYPPEDKKTQ (66 aa)) is disordered. Positions 218–230 (AAEAKAAEAAASA) are enriched in low complexity. At Tyr231 the chain carries Phosphotyrosine; by YES and SRC. Over residues 245-254 (SQPPPPPYYP) the composition is skewed to pro residues. Positions 248–252 (PPPPY) match the PPxY motif 2 motif.

As to quaternary structure, binds to the WW domain of YAP1, WWP1 and WWP2. Interacts with NEDD4. Interacts with ESR1 and UBE3A. In terms of processing, phosphorylated in repsonse to EGF as well as estrogen and progesterone hormones. Tyr-192 and Tyr-231 are phosphorylated by YES and SRC inducing nuclear translocation. In terms of tissue distribution, ubiquitous.

It localises to the cytoplasm. It is found in the nucleus. In terms of biological role, acts as a transcriptional coactivator of estrogen and progesterone receptors (ESR1 and PGR) upon hormone activation. In presence of estrogen, binds to ESR1-responsive promoters. Synergizes with YAP1 to enhance PGR activity. Modulates expression of post-synaptic scaffolding proteins via regulation of ESR1, ESR2 and PGR. In Homo sapiens (Human), this protein is WW domain-binding protein 2.